The following is a 292-amino-acid chain: Transmembrane and ubiquitin-like domain-containing protein 1 (292 aa).

A helical transmembrane segment spans residues 11 to 31 (VTLLFGVVFLVLVLVLAWAST). The interval 34–143 (VEPPEHLLSP…TQPSAEDAAS (110 aa)) is disordered. A compositionally biased stretch (basic and acidic residues) spans 71–80 (VRDEDDKSEP). The span at 84-94 (AGAAGQSADGS) shows a compositional bias: low complexity. One can recognise a Ubiquitin-like domain in the interval 149–222 (MVLRLKFLND…LHCHISQHAT (74 aa)). Helical transmembrane passes span 237–257 (VALN…SVLW) and 269–289 (APAT…AFGV).

The protein localises to the membrane. It localises to the cytoplasm. It is found in the nucleus. Functionally, may contribute to the regulation of translation during cell-cycle progression. May contribute to the regulation of cell proliferation. The membrane form is involved in sterol-regulated ubiquitination and degradation of HMG-CoA reductase HMGCR. May be involved in centrosome assembly. This chain is Transmembrane and ubiquitin-like domain-containing protein 1 (tmub1), found in Danio rerio (Zebrafish).